We begin with the raw amino-acid sequence, 261 residues long: Vacuolar protein sorting-associated protein 37D (261 aa).

Residues alanine 93–alanine 182 enclose the VPS37 C-terminal domain. Residues leucine 172 to arginine 261 are disordered. The span at proline 181–alanine 195 shows a compositional bias: low complexity. 2 stretches are compositionally biased toward pro residues: residues glycine 215 to leucine 224 and proline 231 to arginine 261.

This sequence belongs to the VPS37 family. As to quaternary structure, component of the ESCRT-I complex (endosomal sorting complex required for transport I) which consists of TSG101, VPS28, a VPS37 protein (VPS37A to -D) and MVB12A or MVB12B in a 1:1:1:1 stoichiometry. Interacts with TSG101 and MVB12A. Component of the ESCRT-I complex (endosomal sorting complex required for transport I) which consists of TSG101, VPS28, a VPS37 protein (VPS37A to -D) and UBAP1 in a 1:1:1:1 stoichiometry.

It localises to the late endosome membrane. Component of the ESCRT-I complex, a regulator of vesicular trafficking process. Required for the sorting of endocytic ubiquitinated cargos into multivesicular bodies. May be involved in cell growth and differentiation. In Mus musculus (Mouse), this protein is Vacuolar protein sorting-associated protein 37D.